The primary structure comprises 154 residues: Endoribonuclease YbeY (154 aa).

Zn(2+) contacts are provided by His116, His120, and His126.

It belongs to the endoribonuclease YbeY family. It depends on Zn(2+) as a cofactor.

Its subcellular location is the cytoplasm. Its function is as follows. Single strand-specific metallo-endoribonuclease involved in late-stage 70S ribosome quality control and in maturation of the 3' terminus of the 16S rRNA. This chain is Endoribonuclease YbeY, found in Buchnera aphidicola subsp. Baizongia pistaciae (strain Bp).